A 388-amino-acid polypeptide reads, in one-letter code: Succinate--CoA ligase [ADP-forming] subunit beta (388 aa).

An ATP-grasp domain is found at 9–244 (KQLFARYGLP…QSQEDPREAQ (236 aa)). Residues lysine 46, 53–55 (GRG), glutamate 99, threonine 102, and glutamate 107 each bind ATP. 2 residues coordinate Mg(2+): asparagine 199 and aspartate 213. Substrate contacts are provided by residues asparagine 264 and 321-323 (GIV).

Belongs to the succinate/malate CoA ligase beta subunit family. In terms of assembly, heterotetramer of two alpha and two beta subunits. Mg(2+) serves as cofactor.

It catalyses the reaction succinate + ATP + CoA = succinyl-CoA + ADP + phosphate. The enzyme catalyses GTP + succinate + CoA = succinyl-CoA + GDP + phosphate. The protein operates within carbohydrate metabolism; tricarboxylic acid cycle; succinate from succinyl-CoA (ligase route): step 1/1. Functionally, succinyl-CoA synthetase functions in the citric acid cycle (TCA), coupling the hydrolysis of succinyl-CoA to the synthesis of either ATP or GTP and thus represents the only step of substrate-level phosphorylation in the TCA. The beta subunit provides nucleotide specificity of the enzyme and binds the substrate succinate, while the binding sites for coenzyme A and phosphate are found in the alpha subunit. The chain is Succinate--CoA ligase [ADP-forming] subunit beta from Shigella dysenteriae serotype 1 (strain Sd197).